Reading from the N-terminus, the 422-residue chain is Serine--tRNA ligase (422 aa).

The segment at 1–20 (MHDLKSIRDNPDGFDAGLKR) is disordered. 229–231 (TAE) contacts L-serine. An ATP-binding site is contributed by 260-262 (RSE). Glu-283 serves as a coordination point for L-serine. 347–350 (EISS) is a binding site for ATP. Ser-383 lines the L-serine pocket.

Belongs to the class-II aminoacyl-tRNA synthetase family. Type-1 seryl-tRNA synthetase subfamily. In terms of assembly, homodimer. The tRNA molecule binds across the dimer.

The protein localises to the cytoplasm. The catalysed reaction is tRNA(Ser) + L-serine + ATP = L-seryl-tRNA(Ser) + AMP + diphosphate + H(+). The enzyme catalyses tRNA(Sec) + L-serine + ATP = L-seryl-tRNA(Sec) + AMP + diphosphate + H(+). It functions in the pathway aminoacyl-tRNA biosynthesis; selenocysteinyl-tRNA(Sec) biosynthesis; L-seryl-tRNA(Sec) from L-serine and tRNA(Sec): step 1/1. Catalyzes the attachment of serine to tRNA(Ser). Is also able to aminoacylate tRNA(Sec) with serine, to form the misacylated tRNA L-seryl-tRNA(Sec), which will be further converted into selenocysteinyl-tRNA(Sec). The protein is Serine--tRNA ligase of Paramagnetospirillum magneticum (strain ATCC 700264 / AMB-1) (Magnetospirillum magneticum).